A 56-amino-acid chain; its full sequence is Large ribosomal subunit protein bL33c (56 aa).

Belongs to the bacterial ribosomal protein bL33 family.

The protein resides in the plastid. The protein localises to the chloroplast. The polypeptide is Large ribosomal subunit protein bL33c (rpl33) (Guillardia theta (Cryptophyte)).